The sequence spans 726 residues: Catalase-peroxidase 1 (726 aa).

The interval 1 to 33 (MSTSDDIHNTTATGKCPFHQGGHDQSAGAGTTT) is disordered. A cross-link (tryptophyl-tyrosyl-methioninium (Trp-Tyr) (with M-252)) is located at residues 105 to 226 (WHGAGTYRSI…LGATEMGLIY (122 aa)). His106 serves as the catalytic Proton acceptor. Positions 226-252 (YVNPEGPDHSGEPLSAAAAIRATFGNM) form a cross-link, tryptophyl-tyrosyl-methioninium (Tyr-Met) (with W-105). A heme b-binding site is contributed by His267.

The protein belongs to the peroxidase family. Peroxidase/catalase subfamily. As to quaternary structure, homodimer or homotetramer. It depends on heme b as a cofactor. In terms of processing, formation of the three residue Trp-Tyr-Met cross-link is important for the catalase, but not the peroxidase activity of the enzyme.

It carries out the reaction H2O2 + AH2 = A + 2 H2O. It catalyses the reaction 2 H2O2 = O2 + 2 H2O. Bifunctional enzyme with both catalase and broad-spectrum peroxidase activity. This is Catalase-peroxidase 1 from Escherichia coli O157:H7.